A 174-amino-acid polypeptide reads, in one-letter code: Endoribonuclease YbeY (174 aa).

Zn(2+) contacts are provided by His129, His133, and His139.

It belongs to the endoribonuclease YbeY family. The cofactor is Zn(2+).

It localises to the cytoplasm. In terms of biological role, single strand-specific metallo-endoribonuclease involved in late-stage 70S ribosome quality control and in maturation of the 3' terminus of the 16S rRNA. This is Endoribonuclease YbeY from Lactobacillus delbrueckii subsp. bulgaricus (strain ATCC 11842 / DSM 20081 / BCRC 10696 / JCM 1002 / NBRC 13953 / NCIMB 11778 / NCTC 12712 / WDCM 00102 / Lb 14).